The primary structure comprises 512 residues: Activin receptor type-2B (512 aa).

An N-terminal signal peptide occupies residues 1–24 (MSASWLTLAVLCATLGAGPGHGEA). The Extracellular segment spans residues 25 to 137 (ETRECIYYNA…PPPPTPSLLN (113 aa)). 5 disulfide bridges follow: Cys29/Cys59, Cys49/Cys77, Cys84/Cys103, Cys90/Cys102, and Cys104/Cys109. N-linked (GlcNAc...) asparagine glycosylation is found at Asn42 and Asn65. A helical transmembrane segment spans residues 138–158 (ILVYSLLPIAVLSVAILLAFW). Topologically, residues 159-512 (MYRHRKPPYG…VDLPPKESSI (354 aa)) are cytoplasmic. The Protein kinase domain occupies 190-478 (LQLLEIKARG…LSAGCVEERI (289 aa)). ATP contacts are provided by residues 196 to 204 (KARGRFGCV) and Lys217. Catalysis depends on Asp321, which acts as the Proton acceptor.

This sequence belongs to the protein kinase superfamily. TKL Ser/Thr protein kinase family. TGFB receptor subfamily. It depends on Mg(2+) as a cofactor. Requires Mn(2+) as cofactor. As to expression, not expressed in hen anterior pituitary during the ovulatory cycle but expressed in the ovarian follicle.

It localises to the membrane. The catalysed reaction is L-threonyl-[receptor-protein] + ATP = O-phospho-L-threonyl-[receptor-protein] + ADP + H(+). It carries out the reaction L-seryl-[receptor-protein] + ATP = O-phospho-L-seryl-[receptor-protein] + ADP + H(+). On ligand binding, forms a receptor complex consisting of two type II and two type I transmembrane serine/threonine kinases. Type II receptors phosphorylate and activate type I receptors which autophosphorylate, then bind and activate SMAD transcriptional regulators. Receptor for activin A, activin B and inhibin A. May modulate neuropeptide expression in dorsal root ganglia (DRG) neurons and ovarian follicle development. The protein is Activin receptor type-2B (ACVR2B) of Gallus gallus (Chicken).